Here is a 287-residue protein sequence, read N- to C-terminus: Myogenin (287 aa).

Phosphoserine; by CaMK2G is present on residues serine 77 and serine 79. The region spanning 81-132 (DRRRAATLREKRRLKKVNEAFEALKRSTLLNPNQRLPKVEILRSAIQYIERL) is the bHLH domain. Threonine 87 carries the phosphothreonine; by CaMK2G modification.

As to quaternary structure, homodimer and heterodimer with E12; heterodimerization enhances MYOG DNA-binding and transcriptional activities. Interacts with SMARCA4/BRG1/BAF190A. Interacts (via C-terminal region) with SSRP1 and SUPT16H; the interaction is indicative of an interaction with the FACT complex. Interacts with CSRP3. In terms of processing, phosphorylated by CAMK2G on threonine and serine amino acids in a muscle activity-dependent manner. Phosphorylation of Thr-87 impairs both DNA-binding and trans-activation functions in contracting muscles. Expressed in muscle (at protein level).

The protein resides in the nucleus. In terms of biological role, acts as a transcriptional activator that promotes transcription of muscle-specific target genes and plays a role in muscle differentiation, cell cycle exit and muscle atrophy. Essential for the development of functional embryonic skeletal fiber muscle differentiation. However is dispensable for postnatal skeletal muscle growth; phosphorylation by CAMK2G inhibits its transcriptional activity in respons to muscle activity. Required for the recruitment of the FACT complex to muscle-specific promoter regions, thus promoting gene expression initiation. During terminal myoblast differentiation, plays a role as a strong activator of transcription at loci with an open chromatin structure previously initiated by MYOD1. Together with MYF5 and MYOD1, co-occupies muscle-specific gene promoter core regions during myogenesis. Also cooperates with myocyte-specific enhancer factor MEF2D and BRG1-dependent recruitment of SWI/SNF chromatin-remodeling enzymes to alter chromatin structure at myogenic late gene promoters. Facilitates cell cycle exit during terminal muscle differentiation through the up-regulation of miR-20a expression, which in turn represses genes involved in cell cycle progression. Binds to the E-box containing (E1) promoter region of the miR-20a gene. Also plays a role in preventing reversal of muscle cell differentiation. Contributes to the atrophy-related gene expression in adult denervated muscles. Induces fibroblasts to differentiate into myoblasts. This Rattus norvegicus (Rat) protein is Myogenin (Myog).